We begin with the raw amino-acid sequence, 982 residues long: RNA-directed RNA polymerase (982 aa).

Residues 579-701 enclose the RdRp catalytic domain; sequence TELVETDYSK…SGNVSNELLT (123 aa). The tract at residues 879–982 is disordered; the sequence is EIQAGPSQNK…RQRQRRRTQV (104 aa). Positions 883-899 are enriched in polar residues; the sequence is GPSQNKTSKDGTNPTSD. Basic and acidic residues predominate over residues 913–934; the sequence is DDGHARRSRRSDRDPGKRDAHV. Pro residues predominate over residues 945–954; that stretch reads PTRPVTPVPT. The segment covering 972–982 has biased composition (basic residues); the sequence is VRQRQRRRTQV.

It belongs to the nodaviridae RNA polymerase family.

It catalyses the reaction RNA(n) + a ribonucleoside 5'-triphosphate = RNA(n+1) + diphosphate. Its function is as follows. RNA-dependent RNA polymerase which replicates the viral genome composed of 2 RNA segments, RNA1 and RNA2. In Epinephelus tauvina (Greasy grouper), this protein is RNA-directed RNA polymerase.